We begin with the raw amino-acid sequence, 424 residues long: Splicing factor 3B subunit 4 (424 aa).

Position 2 is an N-acetylalanine (alanine 2). RRM domains follow at residues 13–91 (ATVY…KASA) and 100–179 (ANIF…YAFK). Tyrosine 56 is subject to Phosphotyrosine. Residues 207–424 (PHQLFADAPP…RGPLRGPLPQ (218 aa)) form a disordered region. Residues 222–231 (NPVVSSLGSG) show a composition bias toward low complexity. Residues 232–268 (LPPPGMPPPGSFPPPVPPPGALPPGIPPAMPPPPMPP) show a composition bias toward pro residues. Positions 303–323 (HPGMSQMQLAHHGPHGLGHPH) are enriched in low complexity. Pro residues-rich tracts occupy residues 332–381 (QPPP…PLMP) and 388–424 (PPRP…PLPQ).

It belongs to the SF3B4 family. As to quaternary structure, component of the 17S U2 SnRNP complex, a ribonucleoprotein complex that contains small nuclear RNA (snRNA) U2 and a number of specific proteins. Part of the SF3B subcomplex of the 17S U2 SnRNP complex. SF3B associates with the splicing subcomplex SF3A and a 12S RNA unit to form the U2 small nuclear ribonucleoproteins complex (U2 snRNP). SF3B4 has been found in complex spliceosome 'B' and 'C' as well. Component of the minor (U12-type spliceosome) spliceosome. Found in a complex with PRMT9, SF3B2 and SF3B4.

The protein localises to the nucleus. In terms of biological role, component of the 17S U2 SnRNP complex of the spliceosome, a large ribonucleoprotein complex that removes introns from transcribed pre-mRNAs. The 17S U2 SnRNP complex (1) directly participates in early spliceosome assembly and (2) mediates recognition of the intron branch site during pre-mRNA splicing by promoting the selection of the pre-mRNA branch-site adenosine, the nucleophile for the first step of splicing. Within the 17S U2 SnRNP complex, SF3B4 is part of the SF3B subcomplex, which is required for 'A' complex assembly formed by the stable binding of U2 snRNP to the branchpoint sequence in pre-mRNA. Sequence independent binding of SF3A and SF3B subcomplexes upstream of the branch site is essential, it may anchor U2 snRNP to the pre-mRNA. May also be involved in the assembly of the 'E' complex. Also acts as a component of the minor spliceosome, which is involved in the splicing of U12-type introns in pre-mRNAs. The sequence is that of Splicing factor 3B subunit 4 (Sf3b4) from Rattus norvegicus (Rat).